The chain runs to 145 residues: Leghemoglobin (145 aa).

Positions 3 to 145 (GFTEKQEALV…ELAAALKKAF (143 aa)) constitute a Globin domain. 2 positions are modified to nitrated tyrosine: Tyr-26 and Tyr-31. His-62 serves as a coordination point for O2. Positions 65, 93, and 96 each coordinate heme b. Tyr-134 is subject to Nitrated tyrosine.

The protein belongs to the plant globin family. In terms of assembly, monomer. Nitrated in effective nodules and particularly in hypoxic conditions; this mechanism may play a protective role in the symbiosis by buffering toxic peroxynitrite NO(2)(-). Nitration level decrease during nodule senescence. As to expression, root nodules.

It localises to the cytoplasm. Its subcellular location is the cytosol. The protein resides in the nucleus. Functionally, leghemoglobin that reversibly binds oxygen O(2) through a pentacoordinated heme iron. In root nodules, facilitates the diffusion of oxygen to the bacteroids while preventing the bacterial nitrogenase from being inactivated by buffering dioxygen, nitric oxide and carbon monoxide, and promoting the formation of reactive oxygen species (ROS, e.g. H(2)O(2)). This role is essential for symbiotic nitrogen fixation (SNF). This chain is Leghemoglobin, found in Psophocarpus tetragonolobus (Winged bean).